The chain runs to 422 residues: Interleukin-11 receptor subunit alpha (422 aa).

The first 22 residues, 1–22 (MSSSCSGLSRVLVAVATALVSA), serve as a signal peptide directing secretion. The Extracellular portion of the chain corresponds to 24 to 370 (SPCPQAWGPP…DSVEQVAVLA (347 aa)). Positions 27 to 110 (PQAWGPPGVQ…LGGTVTLQLG (84 aa)) constitute an Ig-like C2-type domain. 3 disulfide bridges follow: cysteine 48–cysteine 94, cysteine 120–cysteine 130, and cysteine 170–cysteine 180. Fibronectin type-III domains lie at 112-219 (PPAR…LRPD) and 220-317 (PPQG…TPST). The N-linked (GlcNAc...) asparagine glycan is linked to asparagine 127. Asparagine 194 carries an N-linked (GlcNAc...) asparagine glycan. Positions 304-308 (WSTWS) match the WSXWS motif motif. The disordered stretch occupies residues 335-355 (EVEPQVDSPAPPRPSLQPHPR). The helical transmembrane segment at 371–391 (SLGILSFLGLVAGALALGLWL) threads the bilayer. Over 392–422 (RLRRGGKDGSPKPGFLASVIPVDRRPGAPNL) the chain is Cytoplasmic. The tract at residues 398–422 (KDGSPKPGFLASVIPVDRRPGAPNL) is disordered. The span at 413–422 (VDRRPGAPNL) shows a compositional bias: basic and acidic residues.

The protein belongs to the type I cytokine receptor family. Type 3 subfamily. In terms of assembly, on IL11 binding, forms a multimer complex with IL6ST/gp130. In terms of processing, a short soluble form is also released from the membrane by proteolysis. The sIL11RA is formed either by limited proteolysis of membrane-bound receptors, a process referred to as ectodomain shedding, or directly secreted from the cells after alternative mRNA splicing. mIL11RA is cleaved by the proteases ADAM10, ELANE and PRTN3. As to expression, expressed in a number of cell lines, including the myelogenous leukemia cell line K-562, the megakaryocytic leukemia cell line M-07e, the erythroleukemia cell line TF-1, and the osteosarcoma cell lines, MG-63 and SaOS-2. Also expressed in normal and malignant prostate epithelial cell lines. Expression levels are increased in prostate carcinoma.

It is found in the membrane. The protein resides in the secreted. Functionally, receptor for interleukin-11 (IL11). The receptor systems for IL6, LIF, OSM, CNTF, IL11 and CT1 can utilize IL6ST for initiating signal transmission. The IL11/IL11RA/IL6ST complex may be involved in the control of proliferation and/or differentiation of skeletogenic progenitor or other mesenchymal cells. Essential for the normal development of craniofacial bones and teeth. Restricts suture fusion and tooth number. Soluble form of IL11 receptor (sIL11RA) that acts as an agonist of IL11 activity. The IL11:sIL11RA complex binds to IL6ST/gp130 on cell surfaces and induces signaling also on cells that do not express membrane-bound IL11RA in a process called IL11 trans-signaling. In Homo sapiens (Human), this protein is Interleukin-11 receptor subunit alpha.